Reading from the N-terminus, the 478-residue chain is MEWETVIGLEIHAQLATKSKIFSGAATAYGAEPNRQACAVDLGMPGVLPVLNKGAVRMATKFGLAIGAKIAPRSVFARKNYFYPDLPKGYQISQYELPIVEGGELWIELEDGERKRIGVTRAHLEEDAGKSLHEDFHGMTGVDLNRAGTPLLEIVSEPDLRSAAEAAAYMKKLHALVRYLEICDGNMQEGSFRCDANVSVRPKGEEKFGTRAELKNLNSFRFVERAINYEVERQIALIESGGTVVQETRLYDADKGETRSMRTKEEANDYRYFPDPDLLPVELDPTFIEEVRETLPELPDEKRARFVEEYGLSDYDAGVLTATRELAEFYESVVTESGGFAKRSANWVQGDFLGALNKAGLELADSPVTPEMLGRLVARIEDETISGRVAKEVFEAMWNGEGEPDQIIEAKGLKQVTDTGAIEAMIDEVLAANPKQVEQYKGGKDKLLGFFVGQVMKASRGKANPGQVNELLKEKLDS.

Belongs to the GatB/GatE family. GatB subfamily. As to quaternary structure, heterotrimer of A, B and C subunits.

It carries out the reaction L-glutamyl-tRNA(Gln) + L-glutamine + ATP + H2O = L-glutaminyl-tRNA(Gln) + L-glutamate + ADP + phosphate + H(+). The enzyme catalyses L-aspartyl-tRNA(Asn) + L-glutamine + ATP + H2O = L-asparaginyl-tRNA(Asn) + L-glutamate + ADP + phosphate + 2 H(+). In terms of biological role, allows the formation of correctly charged Asn-tRNA(Asn) or Gln-tRNA(Gln) through the transamidation of misacylated Asp-tRNA(Asn) or Glu-tRNA(Gln) in organisms which lack either or both of asparaginyl-tRNA or glutaminyl-tRNA synthetases. The reaction takes place in the presence of glutamine and ATP through an activated phospho-Asp-tRNA(Asn) or phospho-Glu-tRNA(Gln). This Alkalilimnicola ehrlichii (strain ATCC BAA-1101 / DSM 17681 / MLHE-1) protein is Aspartyl/glutamyl-tRNA(Asn/Gln) amidotransferase subunit B.